The chain runs to 78 residues: Translational regulator CsrA (78 aa).

It belongs to the CsrA/RsmA family. Homodimer; the beta-strands of each monomer intercalate to form a hydrophobic core, while the alpha-helices form wings that extend away from the core.

The protein resides in the cytoplasm. A translational regulator that binds mRNA to regulate translation initiation and/or mRNA stability. Usually binds in the 5'-UTR at or near the Shine-Dalgarno sequence preventing ribosome-binding, thus repressing translation. Its main target seems to be the major flagellin gene, while its function is anatagonized by FliW. The chain is Translational regulator CsrA from Borrelia recurrentis (strain A1).